The chain runs to 292 residues: 4-hydroxy-tetrahydrodipicolinate synthase (292 aa).

Thr45 contacts pyruvate. Tyr133 serves as the catalytic Proton donor/acceptor. Lys161 serves as the catalytic Schiff-base intermediate with substrate. Ile203 is a pyruvate binding site.

This sequence belongs to the DapA family. In terms of assembly, homotetramer; dimer of dimers.

It localises to the cytoplasm. The catalysed reaction is L-aspartate 4-semialdehyde + pyruvate = (2S,4S)-4-hydroxy-2,3,4,5-tetrahydrodipicolinate + H2O + H(+). It participates in amino-acid biosynthesis; L-lysine biosynthesis via DAP pathway; (S)-tetrahydrodipicolinate from L-aspartate: step 3/4. In terms of biological role, catalyzes the condensation of (S)-aspartate-beta-semialdehyde [(S)-ASA] and pyruvate to 4-hydroxy-tetrahydrodipicolinate (HTPA). The sequence is that of 4-hydroxy-tetrahydrodipicolinate synthase from Salmonella paratyphi A (strain AKU_12601).